The following is a 636-amino-acid chain: Probable potassium transport system protein Kup (636 aa).

Helical transmembrane passes span 22–42, 64–84, 115–135, 150–170, 182–202, 220–240, 261–281, 293–313, 351–371, 383–403, 408–428, and 433–453; these read LGLL…SPLY, ILSL…VMFI, LMVI…MITP, FDGI…ALFL, LFGP…VHGI, FFVV…LALT, WFIL…ALLL, LLAP…ATVI, IYIG…VIGF, VAVT…MLLL, PVLA…FFAA, and IVQG…LMST.

This sequence belongs to the HAK/KUP transporter (TC 2.A.72) family.

It localises to the cell inner membrane. It carries out the reaction K(+)(in) + H(+)(in) = K(+)(out) + H(+)(out). Functionally, transport of potassium into the cell. Likely operates as a K(+):H(+) symporter. The protein is Probable potassium transport system protein Kup of Pseudomonas putida (strain GB-1).